The sequence spans 418 residues: Serine hydroxymethyltransferase (418 aa).

(6S)-5,6,7,8-tetrahydrofolate is bound by residues Leu121 and 125-127; that span reads GHL. Lys230 bears the N6-(pyridoxal phosphate)lysine mark. Residues Glu246 and 355-357 contribute to the (6S)-5,6,7,8-tetrahydrofolate site; that span reads SPF.

Belongs to the SHMT family. As to quaternary structure, homodimer. The cofactor is pyridoxal 5'-phosphate.

The protein localises to the cytoplasm. It catalyses the reaction (6R)-5,10-methylene-5,6,7,8-tetrahydrofolate + glycine + H2O = (6S)-5,6,7,8-tetrahydrofolate + L-serine. Its pathway is one-carbon metabolism; tetrahydrofolate interconversion. It functions in the pathway amino-acid biosynthesis; glycine biosynthesis; glycine from L-serine: step 1/1. In terms of biological role, catalyzes the reversible interconversion of serine and glycine with tetrahydrofolate (THF) serving as the one-carbon carrier. This reaction serves as the major source of one-carbon groups required for the biosynthesis of purines, thymidylate, methionine, and other important biomolecules. Also exhibits THF-independent aldolase activity toward beta-hydroxyamino acids, producing glycine and aldehydes, via a retro-aldol mechanism. This Streptococcus pneumoniae (strain Hungary19A-6) protein is Serine hydroxymethyltransferase.